The sequence spans 441 residues: MDRPAGLRLRPREVACIVKPNERYVVAGGCRLQGEVPVSGAKNAALPILAAALLTSGESVIHNAPMIRDVAVMIEILHKLGARVEEGPEGVSGRTLRIRADGLNGQEVGADFTREMRSSIFLMGPLLARVGKIRISYPGGCAIGPRPIDFHLRGLEALGARIEERFGYIEASVPRRLRGTEIYLDFPSVGATENLMMAAVLAEGTTVIRNAAREPEIVDLQAFLNKMGARVRGAGLDVIRIDGVSKLGSVEHTVIPDRIEAATFLAAAAITGGEVTVQGVIPEHVDAVTAKLREMGTTIREYGTAVTAVGPRRLKAADVKTLPYPGFPTDMQPQMMALAATADGTSIITETIFENRFKVADELRRMGANIKTEGRTAVVQGVPSLSGATVVCPALREGMALILAGLRAEGETTIEDIYHIDRGYQHLEQKLTRLGATISRV.

Position 42-43 (42-43 (KN)) interacts with phosphoenolpyruvate. R117 provides a ligand contact to UDP-N-acetyl-alpha-D-glucosamine. C141 functions as the Proton donor in the catalytic mechanism. C141 carries the 2-(S-cysteinyl)pyruvic acid O-phosphothioketal modification. D330 and I352 together coordinate UDP-N-acetyl-alpha-D-glucosamine.

The protein belongs to the EPSP synthase family. MurA subfamily.

It localises to the cytoplasm. It catalyses the reaction phosphoenolpyruvate + UDP-N-acetyl-alpha-D-glucosamine = UDP-N-acetyl-3-O-(1-carboxyvinyl)-alpha-D-glucosamine + phosphate. It functions in the pathway cell wall biogenesis; peptidoglycan biosynthesis. Its function is as follows. Cell wall formation. Adds enolpyruvyl to UDP-N-acetylglucosamine. This is UDP-N-acetylglucosamine 1-carboxyvinyltransferase 1 from Symbiobacterium thermophilum (strain DSM 24528 / JCM 14929 / IAM 14863 / T).